We begin with the raw amino-acid sequence, 398 residues long: 4-hydroxy-3-methylbut-2-enyl diphosphate reductase (398 aa).

A [4Fe-4S] cluster-binding site is contributed by Cys-66. His-96 contacts (2E)-4-hydroxy-3-methylbut-2-enyl diphosphate. Residue His-96 coordinates dimethylallyl diphosphate. His-96 contacts isopentenyl diphosphate. Cys-157 is a [4Fe-4S] cluster binding site. His-185 contributes to the (2E)-4-hydroxy-3-methylbut-2-enyl diphosphate binding site. Dimethylallyl diphosphate is bound at residue His-185. His-185 provides a ligand contact to isopentenyl diphosphate. Glu-187 serves as the catalytic Proton donor. Thr-250 is a binding site for (2E)-4-hydroxy-3-methylbut-2-enyl diphosphate. A [4Fe-4S] cluster-binding site is contributed by Cys-288. 4 residues coordinate (2E)-4-hydroxy-3-methylbut-2-enyl diphosphate: Ser-317, Ser-318, Asn-319, and Ser-380. 4 residues coordinate dimethylallyl diphosphate: Ser-317, Ser-318, Asn-319, and Ser-380. Residues Ser-317, Ser-318, Asn-319, and Ser-380 each contribute to the isopentenyl diphosphate site.

The protein belongs to the IspH family. [4Fe-4S] cluster is required as a cofactor.

The catalysed reaction is isopentenyl diphosphate + 2 oxidized [2Fe-2S]-[ferredoxin] + H2O = (2E)-4-hydroxy-3-methylbut-2-enyl diphosphate + 2 reduced [2Fe-2S]-[ferredoxin] + 2 H(+). It carries out the reaction dimethylallyl diphosphate + 2 oxidized [2Fe-2S]-[ferredoxin] + H2O = (2E)-4-hydroxy-3-methylbut-2-enyl diphosphate + 2 reduced [2Fe-2S]-[ferredoxin] + 2 H(+). Its pathway is isoprenoid biosynthesis; dimethylallyl diphosphate biosynthesis; dimethylallyl diphosphate from (2E)-4-hydroxy-3-methylbutenyl diphosphate: step 1/1. The protein operates within isoprenoid biosynthesis; isopentenyl diphosphate biosynthesis via DXP pathway; isopentenyl diphosphate from 1-deoxy-D-xylulose 5-phosphate: step 6/6. In terms of biological role, catalyzes the conversion of 1-hydroxy-2-methyl-2-(E)-butenyl 4-diphosphate (HMBPP) into a mixture of isopentenyl diphosphate (IPP) and dimethylallyl diphosphate (DMAPP). Acts in the terminal step of the DOXP/MEP pathway for isoprenoid precursor biosynthesis. The chain is 4-hydroxy-3-methylbut-2-enyl diphosphate reductase from Prochlorococcus marinus (strain MIT 9301).